We begin with the raw amino-acid sequence, 1182 residues long: Phosphatidylinositol 3-kinase age-1 (1182 aa).

Residues 1–16 (MSMGRSPSTTFRSRTG) are compositionally biased toward polar residues. Positions 1-24 (MSMGRSPSTTFRSRTGSHGARDLI) are disordered. Residues 74–174 (NEGVADIITM…FPMLFLYQPD (101 aa)) form the PI3K-ABD domain. The 93-residue stretch at 266-358 (KRKAEINGVC…YRCPGFVVRR (93 aa)) folds into the PI3K-RBD domain. The region spanning 425 to 577 (LDANLMIRPV…SSYGGRVRMP (153 aa)) is the C2 PI3K-type domain. The region spanning 601 to 788 (DDYESCIRDP…SLLMEAYLRG (188 aa)) is the PIK helical domain. The 316-residue stretch at 853–1168 (IIDKAIVLGS…IYEEAFNGSW (316 aa)) folds into the PI3K/PI4K catalytic domain. The segment at 859-865 (VLGSAKR) is G-loop. The tract at residues 1028-1036 (GIKDRHSDN) is catalytic loop. The activation loop stretch occupies residues 1047–1073 (HIDFGHILGHGKTKLGIQRDRQPFILT).

This sequence belongs to the PI3/PI4-kinase family.

The enzyme catalyses a 1,2-diacyl-sn-glycero-3-phospho-(1D-myo-inositol) + ATP = a 1,2-diacyl-sn-glycero-3-phospho-(1D-myo-inositol-3-phosphate) + ADP + H(+). Phosphatidylinositol 3-kinase homolog that regulates longevity and diapause. Promotes cell survival during embryonic development by recruiting akt-1/2 to the plasma membrane through the production of PtdIns(3,4,5)P3. Could function in the development or neuroendocrine signaling of the dauer pathway. Mediates susceptibility to enteropathogenic E.coli infection. May negatively regulate AYI interneuron neurite outgrowth. Plays a role in aversive olfactory learning when an odor is associated with food deprivation. Regulates this process by promoting the nuclear relocalization of egl-4 in AWC olfactory neurons after odor conditioning. The sequence is that of Phosphatidylinositol 3-kinase age-1 from Caenorhabditis elegans.